The chain runs to 717 residues: Probable metal-nicotianamine transporter YSL12 (717 aa).

The segment at 1–56 (MASHANASGGGGDEEMVEASTLRHRHGAGKDANGVGTERQLAAAAAEGEEEGPSSV) is disordered. Helical transmembrane passes span 76 to 96 (AFVVSFFLSIMFSIIVMKLNL), 99 to 119 (GIIPSLNVSAGLLGFFFVRLW), 144 to 164 (CVVAAYGIAFSGGFGTYLFGM), 186 to 206 (IGWMIGFLFLVSFIGLLALVP), 248 to 268 (LGKFFLFSFVWGFFQWFYTAG), 306 to 326 (IVNVSVLLGGILSWGIMWPLI), 351 to 371 (VFISIALILGDGLYNFVKVLI), 422 to 442 (VAFGGYVAVAAVSIGTLPQIF), 450 to 470 (ILVAYVFAPVLAFCNAYGAGL), 482 to 502 (LAIFIFGAWAGASNGGVLVGL), 536 to 556 (FVSQVIGTAMGCVIAPCVFWL), 593 to 613 (LPKHCLTLCYIFFAAAIAINL), 636 to 656 (FYIGSYFAIDMFIGTVILFVW), and 671 to 691 (VASGLICGDGIWTLPQSILAL).

This sequence belongs to the YSL (TC 2.A.67.2) family. As to expression, expressed in root cortex and stele.

It is found in the membrane. In terms of biological role, may be involved in the transport of nicotianamine-chelated metals. This Oryza sativa subsp. japonica (Rice) protein is Probable metal-nicotianamine transporter YSL12 (YSL12).